Consider the following 781-residue polypeptide: DNA translocase FtsK 2 (781 aa).

Transmembrane regions (helical) follow at residues 24-44 (LLGE…LTIL), 74-94 (FADV…LLLL), 120-140 (AGVT…LEAI), and 170-190 (GFTG…SLFF). The Cytoplasmic portion of the chain corresponds to 191 to 781 (HFSWLNLAEQ…NRNGNVVEEE (591 aa)). Residues 414-623 (GKPVVADLAK…FQVSSKIDSR (210 aa)) enclose the FtsK domain. 434-439 (GSGKSV) provides a ligand contact to ATP.

The protein belongs to the FtsK/SpoIIIE/SftA family. As to quaternary structure, homohexamer. Forms a ring that surrounds DNA.

The protein resides in the cell inner membrane. Its function is as follows. Essential cell division protein that coordinates cell division and chromosome segregation. The N-terminus is involved in assembly of the cell-division machinery. The C-terminus functions as a DNA motor that moves dsDNA in an ATP-dependent manner towards the dif recombination site, which is located within the replication terminus region. Translocation stops specifically at Xer-dif sites, where FtsK interacts with the Xer recombinase, allowing activation of chromosome unlinking by recombination. FtsK orienting polar sequences (KOPS) guide the direction of DNA translocation. FtsK can remove proteins from DNA as it translocates, but translocation stops specifically at XerCD-dif site, thereby preventing removal of XerC and XerD from dif. The sequence is that of DNA translocase FtsK 2 (ftsK2) from Ralstonia nicotianae (strain ATCC BAA-1114 / GMI1000) (Ralstonia solanacearum).